A 512-amino-acid polypeptide reads, in one-letter code: SWI/SNF complex subunit SWI3A (512 aa).

One can recognise an SWIRM domain in the interval 13-110 (YTIPAQSSWF…FSSSLKKNDH (98 aa)). One can recognise an SANT domain in the interval 223 to 274 (SAAAVWTEEEILLLLESVLKHGDDWELISQSVSTKSRLDCISKLIELPFGEF). The interval 291 to 325 (DENTEQVQTDGQEHEETETREEKEDRVNEDEPPAK) is disordered. Residues 424–488 (ALGAAAAQAK…IEGVKETIIQ (65 aa)) are a coiled coil.

In terms of assembly, homodimers and heterodimers. Interacts with SWI3B, SWI3C, BSH, and the C-terminus of FCA, but not with BRM or SWI3D. As to expression, expressed in roots, stems, leaves and flowers, but not in siliques.

The protein resides in the nucleus. Functionally, component of a multiprotein complex equivalent of the SWI/SNF complex, an ATP-dependent chromatin-remodeling complex, which is required for the positive and negative regulation of gene expression of a large number of genes. It changes chromatin structure by altering DNA-histone contacts within a nucleosome, leading eventually to a change in nucleosome position, thus facilitating or repressing binding of gene-specific transcription factors. The chain is SWI/SNF complex subunit SWI3A (SWI3A) from Arabidopsis thaliana (Mouse-ear cress).